The primary structure comprises 86 residues: Colicin-E9 immunity protein (86 aa).

Belongs to the colicins ColE2/ColE8/ColE9 and pyocins S1/S2 family.

Functionally, this protein is able to protect a cell, which harbors the plasmid ColE9 encoding colicin E9, against colicin E9, it binds specifically to the DNase-type colicin and inhibits its bactericidal activity. In Escherichia coli, this protein is Colicin-E9 immunity protein (imm).